We begin with the raw amino-acid sequence, 112 residues long: Integration host factor subunit alpha (112 aa).

This sequence belongs to the bacterial histone-like protein family. As to quaternary structure, heterodimer of an alpha and a beta chain.

Its function is as follows. This protein is one of the two subunits of integration host factor, a specific DNA-binding protein that functions in genetic recombination as well as in transcriptional and translational control. The polypeptide is Integration host factor subunit alpha (Rhizobium etli (strain ATCC 51251 / DSM 11541 / JCM 21823 / NBRC 15573 / CFN 42)).